A 357-amino-acid chain; its full sequence is Isoflavone 7-O-methyltransferase (357 aa).

Residues 200 to 203, D224, 224 to 225, 244 to 245, and K258 contribute to the S-adenosyl-L-methionine site; these read VGGG, DR, and DM. H262 functions as the Proton acceptor in the catalytic mechanism.

It belongs to the class I-like SAM-binding methyltransferase superfamily. Cation-independent O-methyltransferase family. COMT subfamily.

It carries out the reaction a 7-hydroxyisoflavone + S-adenosyl-L-methionine = a 7-methoxyisoflavone + S-adenosyl-L-homocysteine + H(+). Functionally, 7-O-methyltransferase involved in the biosynthesis of isoformononetin. Can use daidzein as substrate, but not medicarpin or 2,7,4'-trihydroxyisoflavanone. In Glycyrrhiza echinata (Licorice), this protein is Isoflavone 7-O-methyltransferase (D7OMT).